The sequence spans 204 residues: Small ribosomal subunit protein eS8 (204 aa).

This sequence belongs to the eukaryotic ribosomal protein eS8 family.

This is Small ribosomal subunit protein eS8 (RPS8) from Griffithsia japonica (Red alga).